Consider the following 1322-residue polypeptide: MIVLKGASALSPFRLARFESRLQTTVPELHIVGAWHCYLIQIKSGHTLDMSALHRILQAESVSEPPQEHVVSRYVMPRLGTHSPWSSKTTELLHGAGQPIARIERGTRIDLLGWSANAATCPAIAKQLYDPMTQSLLESEDEVKTLFNVPEPLSLERIALIDLEHANTRWGLALTADEIDYLRTRYTELNRVPSDVELMMFAQANSEHCRHKIFNATWTINDKEQQHSLFQMIKHTHQHTPQYTLSAYADNAAVIEGHPTARYRPDPITGEYRHEAVLPGAFQIKVETHNHPTAIAPFPGASTGAGGEIRDEGATGRGGKPKAGLSGFSVSHLRIPTLPHPWETPRALNPRMASALDIMLEGPLGSAAFNNEFGRPNLLGYFRSFELSASKTLTRAYDKPIMLAGGLGAIDRIHIKKLRLQPGDVIIVLGGPAMLIGLGGGAASSVTSGTSTEALDFASVQRDNPEMQRRCQEVIDHCVALGTNNPIRSFHDVGAGGLSNAIPELLHDSEVGGVIDLAKIPSDDPSLSPLELWCNESQERYVLGISAAHLQAFAAICTRERCPFAAVGVATATEQLIVGYGVTLPAALHVTEQQTPQRANHTETSPTPNTLPPSVREAFAIDLPMDVLFGKAPKMHRNTAHPPPPHWPTLDSTQLDLHHAGLRVLAHPTVAAKNFLVTIGDRSIGGLTAREQMIGPWQLPLADCAITLAGFGTYAGEAFAIGERAPLALLNSAAAARMAVGEAITNLCAAPVESLSMVKLSANWMAAAEHPGEDALLYDAVKAIGIELCPALDISIPVGKDSLSMQSRWQADGATHTCISPVSLVISAFTPVADARRQLTPLLHHQTNSELWLIALDGGKQRLGGSVLAQVHADSAALPTFGGECPDLDTPETLRAFFALMNDARNAGLLLAYHDRSDGGAFAALCEMAFASHLGLDITCDNRTEHLFPHLFNEELGAIVQVADEHRTAFTDLVEQHGLTAYTQRIAHPTTAPSIRIMHNDQCLAQWTWETLFDAWWSVTHAMQRLRDNPECADEEREIARTFTAPGLKPTLSFDPAVDVAMPFIATGIRPTVAILREQGINGHIEMALCFERAGFHCVDIHMNDLITGRVHLDEFVGLAACGGFSYGDVLGAGRGWATSILERTALRDQFAAFFTRTDRFALGVCNGCQMLSQLKSMIPGAEHWPRFVRNRSEQFEARTALLEVIQSPSIFLSGMAGSRLPVAVAHGEGYAMFDTPADQAAAHVALRYINGHGQAATHYPLNPNGSPNGITGLTTTDGRITILMPHPERTPRTINLSWSPNEWGEDTPWLRLFRNARAWVG.

300-311 (GASTGAGGEIRD) contributes to the ATP binding site. Polar residues predominate over residues 593–608 (QQTPQRANHTETSPTP). Positions 593 to 613 (QQTPQRANHTETSPTPNTLPP) are disordered. Ala-702 lines the ATP pocket. Mg(2+)-binding residues include Asp-703, Glu-742, Asn-746, and Asp-915. ATP is bound at residue Ser-917. One can recognise a Glutamine amidotransferase type-1 domain in the interval 1073 to 1322 (VAILREQGIN…LFRNARAWVG (250 aa)). Cys-1166 functions as the Nucleophile in the catalytic mechanism. Catalysis depends on residues His-1287 and Glu-1289.

This sequence in the N-terminal section; belongs to the FGAMS family. In terms of assembly, monomer.

It is found in the cytoplasm. It catalyses the reaction N(2)-formyl-N(1)-(5-phospho-beta-D-ribosyl)glycinamide + L-glutamine + ATP + H2O = 2-formamido-N(1)-(5-O-phospho-beta-D-ribosyl)acetamidine + L-glutamate + ADP + phosphate + H(+). The protein operates within purine metabolism; IMP biosynthesis via de novo pathway; 5-amino-1-(5-phospho-D-ribosyl)imidazole from N(2)-formyl-N(1)-(5-phospho-D-ribosyl)glycinamide: step 1/2. Phosphoribosylformylglycinamidine synthase involved in the purines biosynthetic pathway. Catalyzes the ATP-dependent conversion of formylglycinamide ribonucleotide (FGAR) and glutamine to yield formylglycinamidine ribonucleotide (FGAM) and glutamate. In Xylella fastidiosa (strain 9a5c), this protein is Phosphoribosylformylglycinamidine synthase.